Here is a 256-residue protein sequence, read N- to C-terminus: Nuclear shuttle protein (256 aa).

The short motif at 21 to 42 is the Bipartite nuclear localization signal element; it reads NYGFKRTFVVKRGDAKRRQTQV. The Nuclear localization signal signature appears at 81 to 96; that stretch reads QLCKTQPNRSRSYIKL. The interval 150–187 is interaction with Arabidopsis thaliana NSI protein; that stretch reads ELFGARIHSLGNLAVTPALKERFYILHVLKRVISVEKD.

Belongs to the begomovirus nuclear shuttle protein family. As to quaternary structure, binds to single-stranded and double-stranded viral DNA. Interacts with the host nuclear shuttle interacting (NSI) protein. This interaction may allow NSP to recruit NSI monomers to the viral genome and thus regulate nuclear export of viral genome by NSP.

It localises to the host nucleus. The protein resides in the host cytoplasm. The protein localises to the host cell membrane. Functionally, binds to the genomic viral ssDNA, shuttles it into and out of the cell nucleus. Begomoviruses use 2 proteins to transport their DNA from cell to cell. The nuclear shuttle protein (NSP) shuttles it between nucleus and cytoplasm and the movement protein (MP) probably transports the DNA-NSP complex to the cell periphery and facilitates movement across the cell wall. The protein is Nuclear shuttle protein of Pepper huasteco yellow vein virus (PHYVV).